We begin with the raw amino-acid sequence, 170 residues long: Acireductone dioxygenase (170 aa).

Residues His-99, His-101, Glu-105, and His-144 each contribute to the Fe(2+) site. Ni(2+)-binding residues include His-99, His-101, Glu-105, and His-144.

The protein belongs to the acireductone dioxygenase (ARD) family. As to quaternary structure, monomer. Fe(2+) is required as a cofactor. It depends on Ni(2+) as a cofactor.

It carries out the reaction 1,2-dihydroxy-5-(methylsulfanyl)pent-1-en-3-one + O2 = 3-(methylsulfanyl)propanoate + CO + formate + 2 H(+). The enzyme catalyses 1,2-dihydroxy-5-(methylsulfanyl)pent-1-en-3-one + O2 = 4-methylsulfanyl-2-oxobutanoate + formate + 2 H(+). The protein operates within amino-acid biosynthesis; L-methionine biosynthesis via salvage pathway; L-methionine from S-methyl-5-thio-alpha-D-ribose 1-phosphate: step 5/6. Functionally, catalyzes 2 different reactions between oxygen and the acireductone 1,2-dihydroxy-3-keto-5-methylthiopentene (DHK-MTPene) depending upon the metal bound in the active site. Fe-containing acireductone dioxygenase (Fe-ARD) produces formate and 2-keto-4-methylthiobutyrate (KMTB), the alpha-ketoacid precursor of methionine in the methionine recycle pathway. Ni-containing acireductone dioxygenase (Ni-ARD) produces methylthiopropionate, carbon monoxide and formate, and does not lie on the methionine recycle pathway. The chain is Acireductone dioxygenase from Bacillus cereus (strain ZK / E33L).